A 113-amino-acid chain; its full sequence is T cell receptor alpha variable 36/delta variable 7 (113 aa).

An N-terminal signal peptide occupies residues 1–21; sequence MMKCPQALLAIFWLLLSWVSS. The 91-residue stretch at 23-113 folds into the Ig-like domain; it reads DKVVQSPLSL…DSAIYLCAVE (91 aa). N-linked (GlcNAc...) asparagine glycosylation is found at N43 and N96. C44 and C110 are oxidised to a cystine.

As to quaternary structure, alpha-beta TR is a heterodimer composed of an alpha and beta chain; disulfide-linked. The alpha-beta TR is associated with the transmembrane signaling CD3 coreceptor proteins to form the TR-CD3 (TcR or TCR). The assembly of alpha-beta TR heterodimers with CD3 occurs in the endoplasmic reticulum where a single alpha-beta TR heterodimer associates with one CD3D-CD3E heterodimer, one CD3G-CD3E heterodimer and one CD247 homodimer forming a stable octameric structure. CD3D-CD3E and CD3G-CD3E heterodimers preferentially associate with TR alpha and TR beta chains, respectively. The association of the CD247 homodimer is the last step of TcR assembly in the endoplasmic reticulum and is required for transport to the cell surface.

Its subcellular location is the cell membrane. In terms of biological role, v region of the variable domain of T cell receptor (TR) alpha chain that participates in the antigen recognition. Alpha-beta T cell receptors are antigen specific receptors which are essential to the immune response and are present on the cell surface of T lymphocytes. Recognize peptide-major histocompatibility (MH) (pMH) complexes that are displayed by antigen presenting cells (APC), a prerequisite for efficient T cell adaptive immunity against pathogens. Binding of alpha-beta TR to pMH complex initiates TR-CD3 clustering on the cell surface and intracellular activation of LCK that phosphorylates the ITAM motifs of CD3G, CD3D, CD3E and CD247 enabling the recruitment of ZAP70. In turn ZAP70 phosphorylates LAT, which recruits numerous signaling molecules to form the LAT signalosome. The LAT signalosome propagates signal branching to three major signaling pathways, the calcium, the mitogen-activated protein kinase (MAPK) kinase and the nuclear factor NF-kappa-B (NF-kB) pathways, leading to the mobilization of transcription factors that are critical for gene expression and essential for T cell growth and differentiation. The T cell repertoire is generated in the thymus, by V-(D)-J rearrangement. This repertoire is then shaped by intrathymic selection events to generate a peripheral T cell pool of self-MH restricted, non-autoaggressive T cells. Post-thymic interaction of alpha-beta TR with the pMH complexes shapes TR structural and functional avidity. This Homo sapiens (Human) protein is T cell receptor alpha variable 36/delta variable 7.